The primary structure comprises 634 residues: Chaperone protein HtpG (634 aa).

Residues 1 to 343 (MTEAENRVTL…SDSLPLNVSR (343 aa)) form an a; substrate-binding region. Residues 344 to 560 (EILQENKQLE…SYGMSRTMER (217 aa)) form a b region. The segment at 561 to 634 (IMKSAGQNIP…KLNGLLQSLL (74 aa)) is c.

This sequence belongs to the heat shock protein 90 family. Homodimer.

Its subcellular location is the cytoplasm. Molecular chaperone. Has ATPase activity. The protein is Chaperone protein HtpG of Methylococcus capsulatus (strain ATCC 33009 / NCIMB 11132 / Bath).